The following is a 141-amino-acid chain: Small ribosomal subunit protein uS12 (141 aa).

It belongs to the universal ribosomal protein uS12 family. As to quaternary structure, part of the 30S ribosomal subunit.

Its function is as follows. With S4 and S5 plays an important role in translational accuracy. Located at the interface of the 30S and 50S subunits. The sequence is that of Small ribosomal subunit protein uS12 from Methanosphaera stadtmanae (strain ATCC 43021 / DSM 3091 / JCM 11832 / MCB-3).